Reading from the N-terminus, the 71-residue chain is Beta-defensin 25 (71 aa).

Residues Met-1–Thr-22 form the signal peptide. Intrachain disulfides connect Cys-27-Cys-54, Cys-34-Cys-48, and Cys-38-Cys-55.

Belongs to the beta-defensin family.

It is found in the secreted. Has antibacterial activity. The sequence is that of Beta-defensin 25 (Defb25) from Mus musculus (Mouse).